Reading from the N-terminus, the 212-residue chain is Cyclin-dependent kinase inhibitor 3 (212 aa).

Residues 1-24 (MKPPISIQASEFDSSDEEPADDEQ) are disordered. Positions 1–34 (MKPPISIQASEFDSSDEEPADDEQTPIQISWLPL) are interaction with CDK2. The span at 13 to 24 (DSSDEEPADDEQ) shows a compositional bias: acidic residues. Positions 32 to 201 (LPLSRVNCSQ…FRDKLAAYLS (170 aa)) constitute a Tyrosine-protein phosphatase domain. Catalysis depends on Cys140, which acts as the Phosphocysteine intermediate.

Belongs to the protein-tyrosine phosphatase family. In terms of assembly, interacts with cyclin-dependent kinases such as CDK1, CDK2 and CDK3. Does not interact with CDK4. Interacts (via C-terminus) with phosphorylated CDK2 (via C-terminal helix). Interacts with MS4A3 (via C-terminus); the interaction enhances CDKN3 enzymatic activity.

The protein resides in the cytoplasm. The protein localises to the perinuclear region. It carries out the reaction O-phospho-L-tyrosyl-[protein] + H2O = L-tyrosyl-[protein] + phosphate. The enzyme catalyses O-phospho-L-seryl-[protein] + H2O = L-seryl-[protein] + phosphate. The catalysed reaction is O-phospho-L-threonyl-[protein] + H2O = L-threonyl-[protein] + phosphate. In terms of biological role, may play a role in cell cycle regulation. Dual specificity phosphatase active toward substrates containing either phosphotyrosine or phosphoserine residues. Dephosphorylates CDK2 at 'Thr-160' in a cyclin-dependent manner. This Rattus norvegicus (Rat) protein is Cyclin-dependent kinase inhibitor 3.